A 25-amino-acid polypeptide reads, in one-letter code: Retinol-binding protein 3 (25 aa).

Its subcellular location is the secreted. The protein localises to the extracellular space. It localises to the extracellular matrix. The protein resides in the interphotoreceptor matrix. IRBP shuttles 11-cis and all trans retinoids between the retinol isomerase in the pigment epithelium and the visual pigments in the photoreceptor cells of the retina. This is Retinol-binding protein 3 (RBP3) from Sus scrofa (Pig).